The following is a 382-amino-acid chain: Na(+)/H(+) antiporter NhaA 1 (382 aa).

11 helical membrane passes run 10–30, 45–65, 87–107, 116–136, 145–165, 170–190, 211–231, 252–272, 275–295, 326–346, and 353–373; these read EFSIPLISGVIVALVWANISP, FSFHFIVNDFFMVLFFGIAAA, LLATIGGVVGPVLVYVVLNAL, GWGIPTATDIALAWLVASLVF, FLLLLAIADDAIGLAIIALFY, LPAAPQWLVLVLSGMGAAALL, AGLFMAHLHPALALVFIVPFL, LASFEHEWKVMVDFGLFLFGL, AGVTFGSIGAATWLVLASLVI, LVGLIAGIGLTVALFVAGEAF, and GAAKMGALMSAGCAVLALAAG.

Belongs to the NhaA Na(+)/H(+) (TC 2.A.33) antiporter family.

Its subcellular location is the cell inner membrane. It catalyses the reaction Na(+)(in) + 2 H(+)(out) = Na(+)(out) + 2 H(+)(in). Na(+)/H(+) antiporter that extrudes sodium in exchange for external protons. The sequence is that of Na(+)/H(+) antiporter NhaA 1 from Pelobacter propionicus (strain DSM 2379 / NBRC 103807 / OttBd1).